The primary structure comprises 125 residues: Small ribosomal subunit protein uS13 (125 aa).

The interval 93–125 (RAGLPVRGQRTRTNARTRRGARKTVAGKKKATR) is disordered. Residues 101–125 (QRTRTNARTRRGARKTVAGKKKATR) are compositionally biased toward basic residues.

This sequence belongs to the universal ribosomal protein uS13 family. As to quaternary structure, part of the 30S ribosomal subunit. Forms a loose heterodimer with protein S19. Forms two bridges to the 50S subunit in the 70S ribosome.

Its function is as follows. Located at the top of the head of the 30S subunit, it contacts several helices of the 16S rRNA. In the 70S ribosome it contacts the 23S rRNA (bridge B1a) and protein L5 of the 50S subunit (bridge B1b), connecting the 2 subunits; these bridges are implicated in subunit movement. Contacts the tRNAs in the A and P-sites. This Synechococcus elongatus (strain ATCC 33912 / PCC 7942 / FACHB-805) (Anacystis nidulans R2) protein is Small ribosomal subunit protein uS13.